Reading from the N-terminus, the 146-residue chain is Prepilin peptidase-dependent protein D (146 aa).

The propeptide at 1–6 (MDKQRG) is leader sequence. Phenylalanine 7 bears the N-methylphenylalanine mark. Residues 7–27 (FTLIELMVVIGIIAILSAIGI) traverse the membrane as a helical segment.

The protein belongs to the N-Me-Phe pilin family.

It localises to the fimbrium. The protein localises to the membrane. In terms of biological role, major component of the type IV pilus (T4P) that plays a role in cell adhesion and motility. Not produced when grown under standard laboratory conditions. The sequence is that of Prepilin peptidase-dependent protein D (ppdD) from Escherichia coli (strain K12).